Consider the following 157-residue polypeptide: Regulator of Ty1 transposition protein 102 (157 aa).

Residue Ser-77 is modified to Phosphoserine. The tract at residues 95–157 is disordered; sequence SLMTSHTKGD…TKESKDVKMN (63 aa). The span at 96–116 shows a compositional bias: polar residues; sequence LMTSHTKGDTSKATGAPSANQ. Ser-122 bears the Phosphoserine mark. Positions 147-157 are enriched in basic and acidic residues; that stretch reads NTKESKDVKMN.

As to quaternary structure, interacts with STH1 and SWI3. Component of the two forms of the RSC complex composed of at least either RSC1 or RSC2, and ARP7, ARP9, LDB7, NPL6, RSC3, RSC30, RSC4, RSC58, RSC6, RSC8, RSC9, SFH1, STH1, HTL1 and probably RTT102. The complexes interact with histone and histone variant components of centromeric chromatin. Probable additional component of the SWI/SNF global transcription activator complex. The 1.14 MDa SWI/SNF complex is composed of 11 different subunits: one copy each of SWI1, SNF2/SWI2, SNF5, SNF12/SWP73, ARP7/SWP61, ARP9/SWP59; two copies each of SWI3, SNF6, SNF11, SWP82; and three copies of TAF14/SWP29.

Its subcellular location is the nucleus. Its function is as follows. Probable component of the chromatin structure-remodeling complex (RSC) which is involved in transcription regulation and nucleosome positioning. RSC is responsible for the transfer of a histone octamer from a nucleosome core particle to naked DNA. The reaction requires ATP and involves an activated RSC-nucleosome intermediate. Remodeling reaction also involves DNA translocation, DNA twist and conformational change. As a reconfigurer of centromeric and flanking nucleosomes, RSC complex is required both for proper kinetochore function in chromosome segregation and, via a PKC1-dependent signaling pathway, for organization of the cellular cytoskeleton. Probable component of the SWI/SNF complex, an ATP-dependent chromatin-remodeling complex, is required for the positive and negative regulation of gene expression of a large number of genes. It changes chromatin structure by altering DNA-histone contacts within a nucleosome, leading eventually to a change in nucleosome position, thus facilitating or repressing binding of gene-specific transcription factors. The protein is Regulator of Ty1 transposition protein 102 (RTT102) of Saccharomyces cerevisiae (strain ATCC 204508 / S288c) (Baker's yeast).